The primary structure comprises 558 residues: MESSAGDPYRRPARRTQWLLSALAHHYGLDRGVENEIVVLATGLDQYLQEVFHHLDCRGAGRLPRADFRALCAVLGLNADGETATEDANSAEAASTNPAAGMIAGGDADVREEARLALRADPPELTFRQFHARLCGYFSSRAGPRLPRGALSEHIETQIRLRRPRRRRRPGSPSLHGGAYGERVAHLEEENSSLRELVEDLRAALQSSDARCLALQVGLWKSQSDIPEAAAHELQRAQGALAEAEARARRLQRGQVEVRLRTEEARQAVRRSLHRVRELEALARRVPCLQRQVQRLEAELRGYRSEGPQLLTPQQASPRPGNRNGEPTAGGTRDSDTTPEGVQRSDSRDTDEEDEQLFRSVEGQAASEEEEEERWQEKPGRPQAHGEVPLVQPSGCVSRCDDQTAETLKASFGHCDGAEHICTLELETHVTRLGEQLQTLGTPEEEAELQQMVEAEHLRLELQMVETERVRLSLLEEKLVDVLQLLQRLRDLNISKRALGKMLLNALDRNPSQEGTCGTLAILDTLHQALVGCELLQRNPSAPASTAPAHTNPFLISC.

Positions 43 to 78 (GLDQYLQEVFHHLDCRGAGRLPRADFRALCAVLGLN) constitute an EF-hand domain. Residues 161–170 (LRRPRRRRRP) are compositionally biased toward basic residues. Disordered stretches follow at residues 161–183 (LRRPRRRRRPGSPSLHGGAYGER) and 304–395 (RSEG…QPSG). 2 coiled-coil regions span residues 179–304 (AYGE…RGYR) and 453–495 (VEAE…LNIS).

The chain is EF-hand and coiled-coil domain-containing protein 1 (Efcc1) from Mus musculus (Mouse).